We begin with the raw amino-acid sequence, 349 residues long: S-adenosylmethionine:tRNA ribosyltransferase-isomerase (349 aa).

The protein belongs to the QueA family. As to quaternary structure, monomer.

Its subcellular location is the cytoplasm. The enzyme catalyses 7-aminomethyl-7-carbaguanosine(34) in tRNA + S-adenosyl-L-methionine = epoxyqueuosine(34) in tRNA + adenine + L-methionine + 2 H(+). It functions in the pathway tRNA modification; tRNA-queuosine biosynthesis. Functionally, transfers and isomerizes the ribose moiety from AdoMet to the 7-aminomethyl group of 7-deazaguanine (preQ1-tRNA) to give epoxyqueuosine (oQ-tRNA). This is S-adenosylmethionine:tRNA ribosyltransferase-isomerase from Cupriavidus pinatubonensis (strain JMP 134 / LMG 1197) (Cupriavidus necator (strain JMP 134)).